A 458-amino-acid polypeptide reads, in one-letter code: UDP-N-acetylglucosamine 1-carboxyvinyltransferase (458 aa).

22–23 (KN) provides a ligand contact to phosphoenolpyruvate. A UDP-N-acetyl-alpha-D-glucosamine-binding site is contributed by arginine 94. The active-site Proton donor is aspartate 119. Positions 309 and 331 each coordinate UDP-N-acetyl-alpha-D-glucosamine.

It belongs to the EPSP synthase family. MurA subfamily.

Its subcellular location is the cytoplasm. It carries out the reaction phosphoenolpyruvate + UDP-N-acetyl-alpha-D-glucosamine = UDP-N-acetyl-3-O-(1-carboxyvinyl)-alpha-D-glucosamine + phosphate. The protein operates within cell wall biogenesis; peptidoglycan biosynthesis. Cell wall formation. Adds enolpyruvyl to UDP-N-acetylglucosamine. The polypeptide is UDP-N-acetylglucosamine 1-carboxyvinyltransferase (Chlamydia pneumoniae (Chlamydophila pneumoniae)).